The chain runs to 325 residues: E3 ubiquitin-protein ligase SIAH2 (325 aa).

Polar residues predominate over residues 1–15; it reads MSRPSSTGPSANKPC. Residues 1 to 43 are disordered; it reads MSRPSSTGPSANKPCSKQPPPPQTPHAPSPAAPPAAATISAAG. Ser6 bears the Phosphoserine mark. Ser16 is subject to Phosphoserine; by DYRK2. Pro residues predominate over residues 17-33; that stretch reads KQPPPPQTPHAPSPAAP. At Thr24 the chain carries Phosphothreonine; by MAPK14. At Ser29 the chain carries Phosphoserine; by DYRK2 and MAPK14. Residues 34–43 show a composition bias toward low complexity; sequence PAAATISAAG. At Ser69 the chain carries Phosphoserine; by DYRK2. The RING-type zinc finger occupies 81–116; that stretch reads CPVCFDYVLPPILQCQAGHLVCNQCRQKLSCCPTCR. Phosphothreonine; by DYRK2 is present on Thr120. Residues 131–323 form an SBD region; that stretch reads VASAVLFPCK…LGINVTISTC (193 aa). An SIAH-type zinc finger spans residues 134–194; sequence AVLFPCKYAT…VMSHLMHAHK (61 aa). Zn(2+) contacts are provided by Cys139, Cys146, His158, Cys162, Cys169, Cys176, His188, and His193.

This sequence belongs to the SINA (Seven in absentia) family. As to quaternary structure, homodimer. Interacts with VAV1, without mediating its ubiquitin-mediated degradation. Probable component of some large E3 complex possibly composed of UBE2D1, SIAH2, CACYBP/SIP, SKP1, APC and TBL1X. Interacts with UBE2I. Interacts with UBE2E2. Interacts with PEG10, which may inhibit its activity. Interacts with PEG3 and EGLN2. Interacts with DYRK2. Interacts with SNCAIP. Interacts with NR1D1 and NR1D2. Interacts with DCC. Interacts with AXIN1. Phosphorylated at Thr-24 and Ser-29 by MAPK14, which mediates the degradation by the proteasome of EGLN3. Phosphorylated at Ser-29 by DYRK2; this increases the ubiquitin ligase activity and promotes degradation of EGLN3. As to expression, detected in brain (at protein level).

The protein localises to the cytoplasm. It localises to the nucleus. It catalyses the reaction S-ubiquitinyl-[E2 ubiquitin-conjugating enzyme]-L-cysteine + [acceptor protein]-L-lysine = [E2 ubiquitin-conjugating enzyme]-L-cysteine + N(6)-ubiquitinyl-[acceptor protein]-L-lysine.. Its pathway is protein modification; protein ubiquitination. Its function is as follows. E3 ubiquitin-protein ligase that mediates ubiquitination and subsequent proteasomal degradation of target proteins. E3 ubiquitin ligases accept ubiquitin from an E2 ubiquitin-conjugating enzyme in the form of a thioester and then directly transfers the ubiquitin to targeted substrates. Mediates E3 ubiquitin ligase activity either through direct binding to substrates or by functioning as the essential RING domain subunit of larger E3 complexes. Mediates ubiquitination and proteasomal degradation of DYRK2 in response to hypoxia. Promotes monoubiquitination of SNCA. Triggers the ubiquitin-mediated degradation of many substrates, including proteins involved in transcription regulation (GPS2, POU2AF1, PML, NCOR1), a cell surface receptor (DCC), an antiapoptotic protein (BAG1), and a protein involved in synaptic vesicle function in neurons (SYP). It is thereby involved in apoptosis, tumor suppression, cell cycle, transcription and signaling processes. Has some overlapping function with SIAH1. Triggers the ubiquitin-mediated degradation of TRAF2, whereas SIAH1 does not. Regulates cellular clock function via ubiquitination of circadian transcriptional repressors NR1D1 and NR1D2 leading to their proteasomal degradation. Plays an important role in mediating the rhythmic degradation/clearance of NR1D1 and NR1D2 contributing to their circadian profile of protein abundance. Mediates ubiquitination and degradation of EGLN2 and EGLN3 in response to the unfolded protein response (UPR), leading to their degradation and subsequent stabilization of ATF4. Also part of the Wnt signaling pathway in which it mediates the Wnt-induced ubiquitin-mediated proteasomal degradation of AXIN1. In Rattus norvegicus (Rat), this protein is E3 ubiquitin-protein ligase SIAH2 (Siah2).